The primary structure comprises 340 residues: Nuclear hormone receptor family member nhr-197 (340 aa).

A DNA-binding region (nuclear receptor) is located at residues 1–75 (MNCVVCSGRA…VGMTLAPLND (75 aa)). NR C4-type zinc fingers lie at residues 3-23 (CVVCSGRATNRNYGAMSCFAC) and 39-58 (CKRIQNCTIHFKIFPKCRAC). Residues 98–337 (KNDKNYSHFV…KRIMQDLFSN (240 aa)) enclose the NR LBD domain.

This sequence belongs to the nuclear hormone receptor family.

The protein resides in the nucleus. Orphan nuclear receptor. The chain is Nuclear hormone receptor family member nhr-197 (nhr-197) from Caenorhabditis elegans.